Consider the following 497-residue polypeptide: Di-/tripeptide transporter (497 aa).

The Cytoplasmic segment spans residues 1-36 (MQNLNKTEKTFFGQPRGLLTLFQTEFWERFSYYGMR). A helical transmembrane segment spans residues 37 to 55 (AILVYYLYALTTADNAGLG). Topologically, residues 56-64 (LPKAQAMAI) are extracellular. Residues 65–83 (VSIYGALVYLSTIVGGWVA) form a helical membrane-spanning segment. The Cytoplasmic segment spans residues 84–92 (DRLLGASRT). Residues 93 to 111 (IFLGGILITLGHVALATPF) traverse the membrane as a helical segment. Over 112–115 (GLSS) the chain is Extracellular. Residues 116-134 (LFVALFLIILGTGMLKPNI) traverse the membrane as a helical segment. Over 135–154 (SNMVGHLYSKDDSRRDTGFN) the chain is Cytoplasmic. A helical membrane pass occupies residues 155-173 (IFVVGINMGSLIAPLIVGT). Topologically, residues 174–181 (VGQGVNYH) are extracellular. The chain crosses the membrane as a helical span at residues 182 to 200 (LGFSLAAIGMIFALFAYWY). The Cytoplasmic portion of the chain corresponds to 201–224 (GRLRHFPEIGREPSNPMDAKAKRN). Residues 225 to 243 (FIITLTIVLIVALIGFFLI) traverse the membrane as a helical segment. Over 244–254 (YQASPANFINN) the chain is Extracellular. A helical membrane pass occupies residues 255–273 (FINVLSIIGIVVPIIYFVM). Over 274 to 293 (MFTSKKVESDERRKLTAYIP) the chain is Cytoplasmic. A helical membrane pass occupies residues 294 to 312 (LFLSAIVFWAIEEQSSTII). The Extracellular portion of the chain corresponds to 313-335 (AVWGESRSNLNPTWFGFTFHIDP). Residues 336 to 354 (SWYQLLNPLFIVLLSPIFV) traverse the membrane as a helical segment. Residues 355–372 (RIWNKLGDRQPSTIVKFG) are Cytoplasmic-facing. Residues 373-391 (LGLMLTGASYLIMTLPGLL) form a helical membrane-spanning segment. Topologically, residues 392–425 (NGTSGRASALWLVLMFAVQMAGELLVSPVGLSVS) are extracellular. Residues 426 to 444 (TKLAPVAFQSQMMAMWFLA) form a helical membrane-spanning segment. The Cytoplasmic segment spans residues 445 to 497 (DSTSQAINAQITPIFKAATEVHFFAITGIIGIIVGIILLIIKKPILKLMGDVR).

This sequence belongs to the major facilitator superfamily. Proton-dependent oligopeptide transporter (POT/PTR) (TC 2.A.17) family.

The protein resides in the cell membrane. Its function is as follows. Proton-dependent uptake of di- or tri-peptides. The chain is Di-/tripeptide transporter (dtpT) from Lactococcus lactis subsp. cremoris (Streptococcus cremoris).